The sequence spans 328 residues: N-acyl-aromatic-L-amino acid amidohydrolase (carboxylate-forming) A (328 aa).

Positions 30 and 33 each coordinate Zn(2+). Residues R74 and 81–82 (NR) each bind substrate. H127 contacts Zn(2+). Substrate is bound by residues E189 and Y300.

The protein belongs to the AspA/AstE family. Aspartoacylase subfamily. As to quaternary structure, homotetramer. Zn(2+) serves as cofactor.

It localises to the apical cell membrane. The protein resides in the cytoplasm. The catalysed reaction is an N-acyl-aromatic L-alpha-amino acid + H2O = an aromatic L-alpha-amino acid + a carboxylate. The enzyme catalyses an N-acetyl-L-cysteine-S-conjugate + H2O = an S-substituted L-cysteine + acetate. In terms of biological role, plays an important role in deacetylating mercapturic acids in kidney proximal tubules. The chain is N-acyl-aromatic-L-amino acid amidohydrolase (carboxylate-forming) A (acy3.1) from Danio rerio (Zebrafish).